We begin with the raw amino-acid sequence, 244 residues long: MELTIFILRLAIYILTFPLYLLNFLGLWSWICKKWFPYFLVRFTVIYNEQMASKKRELFSNLQEFAGPSGKLSLLEVGCGTGANFKFYPPGCRVTCIDPNPNFEKFLIKSIAENRHLQFERFVVAAGENMHQVADGSVDVVVCTLVLCSVKNQERILREVCRVLRPGGAFYFMEHVAAECSTWNYFWQQVLDPAWHLLFDGCNLTRESWKALERASFSKLKLQHIQAPLSWELVRPHIYGYAVK.

The segment at 1-28 (MELTIFILRLAIYILTFPLYLLNFLGLW) is targeting to lipid droplets. The signal sequence occupies residues 1–29 (MELTIFILRLAIYILTFPLYLLNFLGLWS).

The protein belongs to the methyltransferase superfamily. (Microbial infection) Interacts with HCV non-structural protein 4B/NS4B (via C-terminal region); this interaction may promote the recruitment of NS4B in the proximity of lipid droplet. As to quaternary structure, self-associates. Interacts with SNRNP200; this interaction may promote the odontogenic differentiation. In terms of processing, methylated at lysine residues most likely by EZH2. As to expression, expressed in the liver.

It localises to the lipid droplet. Its subcellular location is the endoplasmic reticulum. The protein localises to the membrane. It is found in the microsome. The protein resides in the cytoplasm. It localises to the cytosol. The enzyme catalyses a thiol + S-adenosyl-L-methionine = a methyl thioether + S-adenosyl-L-homocysteine + H(+). The catalysed reaction is an adenosine in mRNA + S-adenosyl-L-methionine = an N(6)-methyladenosine in mRNA + S-adenosyl-L-homocysteine + H(+). Its activity is regulated as follows. Inhibited by 2,3-dichloro-alpha-methylbenzylamine (DCMB). In terms of biological role, thiol S-methyltransferase that catalyzes the transfer of a methyl group from S-adenosyl-L-methionine to alkyl and phenolic thiol-containing acceptor substrates. Together with TMT1B accounts for most of S-thiol methylation activity in the endoplasmic reticulum of hepatocytes. Able to methylate the N6 position of adenosine residues in long non-coding RNAs (lncRNAs). May facilitate lncRNAs transfer into exosomes at the tumor-stroma interface. Promotes osteogenic and odontogenic differentiation by regulating the expression of genes involved in stem cell differentiation and survival. Targeted from the endoplasmic reticulum to lipid droplets, where it recruits cellular proteins to form functional organelles. Its function is as follows. (Microbial infection) May be involved in the assembly and release stages of hepatitis C virus (HCV) life cycle and thus play a crucial role in HCV propagation. The protein is Thiol S-methyltransferase TMT1A of Homo sapiens (Human).